A 390-amino-acid polypeptide reads, in one-letter code: Lipid droplet-regulating VLDL assembly factor AUP1 homolog (390 aa).

Over 1-32 (MASPEASSSGNTEDLRIEDLFHQKRNEDTIAK) the chain is Cytoplasmic. The stretch at 33–53 (IFSIIYAPVGLIILLIRVFLG) is an intramembrane region. At 54–390 (FHTFIVACLL…NRQKYMNRDS (337 aa)) the chain is on the cytoplasmic side. Residues 305 to 347 (QMDECAMRIKQSFPSFHLSAIRRDLEKTRSQTTTVNNLKAGKI) enclose the CUE domain.

The protein belongs to the AUP1 family.

It is found in the endoplasmic reticulum membrane. The protein localises to the lipid droplet. The protein is Lipid droplet-regulating VLDL assembly factor AUP1 homolog of Caenorhabditis elegans.